The primary structure comprises 309 residues: Golgi to ER traffic protein 4 homolog (309 aa).

The interval 290 to 309 is disordered; that stretch reads SGGGLASMEVDGPTIEDEMD.

This sequence belongs to the GET4 family.

Functionally, may play a role in insertion of tail-anchored proteins into the endoplasmic reticulum membrane. The polypeptide is Golgi to ER traffic protein 4 homolog (Dictyostelium discoideum (Social amoeba)).